Reading from the N-terminus, the 385-residue chain is Non-structural maintenance of chromosomes element 4 homolog A (385 aa).

Residues 1 to 69 (MSGDSSGRGP…PSDSGDEMMD (69 aa)) are disordered. Basic and acidic residues-rich tracts occupy residues 10 to 21 (PEGRGRGRDPHR) and 42 to 55 (SARE…RPSL). Residues 56 to 68 (EDTEPSDSGDEMM) are compositionally biased toward acidic residues. Threonine 345 bears the Phosphothreonine mark. Serine 377 is modified (phosphoserine).

It belongs to the NSE4 family. Component of the SMC5-SMC6 complex which consists at least of SMC5, SMC6, NSMCE2, NSMCE1, NSMCE4A or EID3 and NSMCE3. NSMCE1, NSMCE4A or EID3 and NSMCE3 probably form a subcomplex that bridges the head domains of the SMC5:SMC6 heterodimer. Interacts with NSMCE3.

It is found in the nucleus. It localises to the chromosome. Its subcellular location is the telomere. Component of the SMC5-SMC6 complex, a complex involved in DNA double-strand breaks by homologous recombination. The complex may promote sister chromatid homologous recombination by recruiting the SMC1-SMC3 cohesin complex to double-strand breaks. The complex is required for telomere maintenance via recombination in ALT (alternative lengthening of telomeres) cell lines and mediates sumoylation of shelterin complex (telosome) components which is proposed to lead to shelterin complex disassembly in ALT-associated PML bodies (APBs). Is involved in positive regulation of response to DNA damage stimulus. The protein is Non-structural maintenance of chromosomes element 4 homolog A (NSMCE4A) of Homo sapiens (Human).